The chain runs to 489 residues: Mitochondrial-processing peptidase subunit beta (489 aa).

Residues 1 to 45 (MAAAALSRTLLPEARRRLWGFTRRLPLRRAAAQPLYFGGDRLRST) constitute a mitochondrion transit peptide. Residue His-101 participates in Zn(2+) binding. Glu-104 functions as the Proton acceptor in the catalytic mechanism. Zn(2+) is bound by residues His-105 and Glu-181.

The protein belongs to the peptidase M16 family. Heterodimer of PMPCA (alpha) and PMPCB (beta) subunits, forming the mitochondrial processing protease (MPP) in which PMPCA is involved in substrate recognition and binding and PMPCB is the catalytic subunit. It depends on Zn(2+) as a cofactor.

Its subcellular location is the mitochondrion matrix. The enzyme catalyses Release of N-terminal transit peptides from precursor proteins imported into the mitochondrion, typically with Arg in position P2.. With respect to regulation, binding to PMPCA is required for catalytic activity. Functionally, catalytic subunit of the essential mitochondrial processing protease (MPP), which cleaves the mitochondrial sequence off newly imported precursors proteins. Preferentially, cleaves after an arginine at position P2. Required for PINK1 turnover by coupling PINK1 mitochondrial import and cleavage, which results in subsequent PINK1 proteolysis. The sequence is that of Mitochondrial-processing peptidase subunit beta (Pmpcb) from Mus musculus (Mouse).